Here is a 554-residue protein sequence, read N- to C-terminus: Glucose-6-phosphate isomerase (554 aa).

Glu-359 acts as the Proton donor in catalysis. Residues His-390 and Lys-518 contribute to the active site.

Belongs to the GPI family.

It localises to the cytoplasm. The enzyme catalyses alpha-D-glucose 6-phosphate = beta-D-fructose 6-phosphate. Its pathway is carbohydrate biosynthesis; gluconeogenesis. The protein operates within carbohydrate degradation; glycolysis; D-glyceraldehyde 3-phosphate and glycerone phosphate from D-glucose: step 2/4. Catalyzes the reversible isomerization of glucose-6-phosphate to fructose-6-phosphate. This chain is Glucose-6-phosphate isomerase, found in Pseudomonas syringae pv. tomato (strain ATCC BAA-871 / DC3000).